The sequence spans 307 residues: Serine/threonine-protein phosphatase PP2A-3 catalytic subunit (307 aa).

Positions 55, 57, 83, and 115 each coordinate Mn(2+). The active-site Proton donor is the histidine 116. Residues histidine 165 and histidine 239 each contribute to the Mn(2+) site.

It belongs to the PPP phosphatase family. PP-2A subfamily. Mn(2+) is required as a cofactor.

Its subcellular location is the cytoplasm. It catalyses the reaction O-phospho-L-seryl-[protein] + H2O = L-seryl-[protein] + phosphate. It carries out the reaction O-phospho-L-threonyl-[protein] + H2O = L-threonyl-[protein] + phosphate. This chain is Serine/threonine-protein phosphatase PP2A-3 catalytic subunit (PP2A3), found in Oryza sativa subsp. indica (Rice).